A 749-amino-acid polypeptide reads, in one-letter code: Catalase-peroxidase 2 (749 aa).

A signal peptide spans 1–27 (MFKRTIPLFAAFTLAISPSVFPNYAYA). Residues 107–229 (WHAAGTYRIY…LAATVMGLIY (123 aa)) constitute a cross-link (tryptophyl-tyrosyl-methioninium (Trp-Tyr) (with M-255)). The active-site Proton acceptor is the His-108. A cross-link (tryptophyl-tyrosyl-methioninium (Tyr-Met) (with W-107)) is located at residues 229–255 (YVNPEGPNGVPDPLAAAEKIRETFGRM). Residue His-270 coordinates heme b.

The protein belongs to the peroxidase family. Peroxidase/catalase subfamily. Homodimer or homotetramer. The cofactor is heme b. Formation of the three residue Trp-Tyr-Met cross-link is important for the catalase, but not the peroxidase activity of the enzyme.

It carries out the reaction H2O2 + AH2 = A + 2 H2O. It catalyses the reaction 2 H2O2 = O2 + 2 H2O. Bifunctional enzyme with both catalase and broad-spectrum peroxidase activity. The protein is Catalase-peroxidase 2 of Legionella pneumophila (strain Paris).